The primary structure comprises 459 residues: Mitochondrial distribution and morphology protein 10 (459 aa).

The protein belongs to the MDM10 family. In terms of assembly, component of the ER-mitochondria encounter structure (ERMES) or MDM complex, composed of mmm1, mdm10, mdm12 and mdm34. Associates with the mitochondrial outer membrane sorting assembly machinery SAM(core) complex.

The protein localises to the mitochondrion outer membrane. Functionally, component of the ERMES/MDM complex, which serves as a molecular tether to connect the endoplasmic reticulum and mitochondria. Components of this complex are involved in the control of mitochondrial shape and protein biogenesis and may function in phospholipid exchange. mdm10 is involved in the late assembly steps of the general translocase of the mitochondrial outer membrane (TOM complex). Functions in the tom40-specific route of the assembly of outer membrane beta-barrel proteins, including the association of tom40 with the receptor tom22 and small TOM proteins. Can associate with the SAM(core) complex as well as the mdm12-mmm1 complex, both involved in late steps of the major beta-barrel assembly pathway, that is responsible for biogenesis of all outer membrane beta-barrel proteins. May act as a switch that shuttles between both complexes and channels precursor proteins into the tom40-specific pathway. Plays a role in mitochondrial morphology and in the inheritance of mitochondria. This chain is Mitochondrial distribution and morphology protein 10 (mdmB), found in Aspergillus terreus (strain NIH 2624 / FGSC A1156).